Here is a 237-residue protein sequence, read N- to C-terminus: Oligoribonuclease, mitochondrial (237 aa).

A mitochondrion-targeting transit peptide spans M1 to G25. An Exonuclease domain is found at M43 to L207. D47 and E49 together coordinate Mg(2+). S92 carries the phosphoserine modification. Residue Y122 is modified to Phosphotyrosine. D147 contributes to the Mg(2+) binding site. K173 bears the N6-acetyllysine mark. Residue H194 is part of the active site. D199 serves as a coordination point for Mg(2+).

Belongs to the oligoribonuclease family. In terms of assembly, homodimer. Homotetramer. Requires Mn(2+) as cofactor. Mg(2+) is required as a cofactor. Highly expressed in the heart and at lower levels in the lymph nodes, brain, lung, liver, spleen and thymus.

It localises to the mitochondrion intermembrane space. Its subcellular location is the mitochondrion matrix. It is found in the mitochondrion. The protein localises to the cytoplasm. The protein resides in the nucleus. With respect to regulation, inhibited by adenosine 3',5'-bisphosphate. Its function is as follows. 3'-to-5'exoribonuclease that preferentially degrades DNA and RNA oligonucleotides composed of only two nucleotides. Binds and degrades longer oligonucleotides with a lower affinity. Plays dual roles in mitochondria, scavenging nanoRNAs (small RNA oligonucleotides of &lt;5 nucleotides) that are produced by the degradosome and clearing short RNAs that are generated by RNA processing. Essential for correct initiation of mitochondrial transcription, degrading mitochondrial RNA dinucleotides to prevent RNA-primed transcription at non-canonical sites in the mitochondrial genome. Essential for embryonic development. 3'-to-5'exoribonuclease that preferentially degrades DNA and RNA oligonucleotides composed of only two nucleotides. In Homo sapiens (Human), this protein is Oligoribonuclease, mitochondrial (REXO2).